Consider the following 126-residue polypeptide: Large ribosomal subunit protein mL55 (126 aa).

The transit peptide at 1-34 (MSAKGSLLRLLWQCGMTRAAPESCRYLYTSSWRA) directs the protein to the mitochondrion. S86 is modified (phosphoserine).

The protein belongs to the mitochondrion-specific ribosomal protein mL55 family. Component of the mitochondrial ribosome large subunit (39S) which comprises a 16S rRNA and about 50 distinct proteins.

Its subcellular location is the mitochondrion. This chain is Large ribosomal subunit protein mL55 (MRPL55), found in Bos taurus (Bovine).